The sequence spans 441 residues: Maltose-6'-phosphate glucosidase MalH (441 aa).

NAD(+) is bound at residue 4–70 (FSVVIAGGGS…PEIEFLATTN (67 aa)). Positions 93 and 147 each coordinate substrate. Cys169 is a binding site for Mn(2+). The active-site Proton donor is Asp170. Residue His200 coordinates Mn(2+). Tyr264 serves as the catalytic Proton acceptor. Substrate is bound at residue Arg284.

As to quaternary structure, homotetramer. It depends on NAD(+) as a cofactor. The cofactor is Mn(2+).

The catalysed reaction is alpha-maltose 6'-phosphate + H2O = D-glucose 6-phosphate + D-glucose. Catalyzes the hydrolysis of O-alpha-linked disaccharide 6-phosphates, including maltose-6'P and all five phosphorylated isomers of sucrose, but not sucrose-6P. Does not hydrolyze beta-linked disaccharide 6-phosphates such as cellobiose-6'P and gentiobiose-6'P. Is involved in the dissimilation of maltose and related O-alpha-linked glucosides produced via the phosphoenolpyruvate-dependent sugar phosphotransferase system (PEP-PTS). This Clostridium acetobutylicum (strain ATCC 824 / DSM 792 / JCM 1419 / IAM 19013 / LMG 5710 / NBRC 13948 / NRRL B-527 / VKM B-1787 / 2291 / W) protein is Maltose-6'-phosphate glucosidase MalH (malH).